A 592-amino-acid chain; its full sequence is Aspartate--tRNA(Asp/Asn) ligase (592 aa).

Position 182 (Glu182) interacts with L-aspartate. Positions 206–209 (QIFK) are aspartate. Arg228 provides a ligand contact to L-aspartate. ATP contacts are provided by residues 228–230 (RDE) and Gln237. His455 is a binding site for L-aspartate. Glu489 contacts ATP. Arg496 lines the L-aspartate pocket. Residue 541–544 (GLDR) participates in ATP binding.

Belongs to the class-II aminoacyl-tRNA synthetase family. Type 1 subfamily. Homodimer.

It localises to the cytoplasm. It carries out the reaction tRNA(Asx) + L-aspartate + ATP = L-aspartyl-tRNA(Asx) + AMP + diphosphate. Functionally, aspartyl-tRNA synthetase with relaxed tRNA specificity since it is able to aspartylate not only its cognate tRNA(Asp) but also tRNA(Asn). Reaction proceeds in two steps: L-aspartate is first activated by ATP to form Asp-AMP and then transferred to the acceptor end of tRNA(Asp/Asn). The polypeptide is Aspartate--tRNA(Asp/Asn) ligase (Caldanaerobacter subterraneus subsp. tengcongensis (strain DSM 15242 / JCM 11007 / NBRC 100824 / MB4) (Thermoanaerobacter tengcongensis)).